Here is a 163-residue protein sequence, read N- to C-terminus: Endoribonuclease YbeY (163 aa).

3 residues coordinate Zn(2+): His121, His125, and His131.

It belongs to the endoribonuclease YbeY family. The cofactor is Zn(2+).

Its subcellular location is the cytoplasm. Single strand-specific metallo-endoribonuclease involved in late-stage 70S ribosome quality control and in maturation of the 3' terminus of the 16S rRNA. The protein is Endoribonuclease YbeY of Synechococcus sp. (strain JA-2-3B'a(2-13)) (Cyanobacteria bacterium Yellowstone B-Prime).